A 342-amino-acid chain; its full sequence is DNA-directed RNA polymerase subunit alpha (342 aa).

The segment at 1–239 is alpha N-terminal domain (alpha-NTD); that stretch reads MTTFLAKNWS…DQLQVFINFQ (239 aa). Residues 254–342 are alpha C-terminal domain (alpha-CTD); that stretch reads INPVLLKKVY…SLAKKHEDQY (89 aa).

This sequence belongs to the RNA polymerase alpha chain family. In terms of assembly, homodimer. The RNAP catalytic core consists of 2 alpha, 1 beta, 1 beta' and 1 omega subunit. When a sigma factor is associated with the core the holoenzyme is formed, which can initiate transcription.

The catalysed reaction is RNA(n) + a ribonucleoside 5'-triphosphate = RNA(n+1) + diphosphate. Its function is as follows. DNA-dependent RNA polymerase catalyzes the transcription of DNA into RNA using the four ribonucleoside triphosphates as substrates. This Orientia tsutsugamushi (strain Ikeda) (Rickettsia tsutsugamushi) protein is DNA-directed RNA polymerase subunit alpha.